Here is a 259-residue protein sequence, read N- to C-terminus: Pimeloyl-[acyl-carrier protein] methyl ester esterase (259 aa).

The 226-residue stretch at 16–241 (FVMLHGWGMN…QSAHVPFISH (226 aa)) folds into the AB hydrolase-1 domain. Residues tryptophan 22, 82-83 (SM), and 143-147 (FLLLQ) contribute to the substrate site. Serine 82 serves as the catalytic Nucleophile. Active-site residues include aspartate 207 and histidine 235. Residue histidine 235 participates in substrate binding.

It belongs to the AB hydrolase superfamily. Carboxylesterase BioH family. As to quaternary structure, monomer.

Its subcellular location is the cytoplasm. The enzyme catalyses 6-carboxyhexanoyl-[ACP] methyl ester + H2O = 6-carboxyhexanoyl-[ACP] + methanol + H(+). Its pathway is cofactor biosynthesis; biotin biosynthesis. The physiological role of BioH is to remove the methyl group introduced by BioC when the pimeloyl moiety is complete. It allows to synthesize pimeloyl-ACP via the fatty acid synthetic pathway through the hydrolysis of the ester bonds of pimeloyl-ACP esters. The chain is Pimeloyl-[acyl-carrier protein] methyl ester esterase from Hamiltonella defensa subsp. Acyrthosiphon pisum (strain 5AT).